Here is a 177-residue protein sequence, read N- to C-terminus: MSNITYVKGNILKPKSYARILIHSCNCNGSWGGGIAYQLALRYPKAEKDYVEVCEKYGSNLLGKCILLPSYENSDLLICCLFTSSFGGSSHGEKQSILNYTKLALDKLKTFREAKDKTRTSEDSIGDYLNGHIKYPIGEYKLEMPQINSGIFGVPWKETERVLEEFSGDMSFTVYQL.

The Macro domain occupies 1–177 (MSNITYVKGN…GDMSFTVYQL (177 aa)). Residues 9 to 11 (GNI), 24 to 26 (SCN), 31 to 36 (WGGGIA), and 147 to 153 (INSGIFG) contribute to the substrate site.

The protein belongs to the POA1 family.

The catalysed reaction is ADP-alpha-D-ribose 1''-phosphate + H2O = ADP-D-ribose + phosphate. Its function is as follows. Highly specific phosphatase involved in the metabolism of ADP-ribose 1''-phosphate (Appr1p) which is produced as a consequence of tRNA splicing. Removes ADP-ribose from glutamate residues in proteins bearing a single ADP-ribose moiety. Inactive towards proteins bearing poly-ADP-ribose. The protein is ADP-ribose 1''-phosphate phosphatase (POA1) of Saccharomyces cerevisiae (strain YJM789) (Baker's yeast).